A 947-amino-acid chain; its full sequence is MEWKDTLNLPKTAFPMKGNLPNKEPEIIKKWEEIDLYKRLREERKGKEKYILHDGPPYANGNIHLGHALNKILKDILVKYESMKGKDAPFVPGWDCHGLPIEQQVEKLLKKEKKRKEDLSKSEFRKLCREYALKYVNIQREEFKRLGIIGNWEKPYLTMRPSYQAQEIRELGKIFRKGIAYRGKKPVYWCIYDKTAEAEAEVEYKEKKDPSIYVAFELVESPFDIKEKVYAVIWTTTPWTLPANLGIMVNPDFDYLFLRSEDKVYIVAKDLLESFSEKTGIEGEVIKEVKGRELEFLEYRHPFIDRVSKIYLSEFVELGTGTGLVHMAPGHGQEDYIIGQRYGVEAFAPVDDEGRFTDEAPEFIQGLRVFEANERIVEKLRENGVLLHHETVKHSYPHCWRCKNPVIFRATPQWFISMDGITEKGETLRGEALKEIERVKWIPHWGENRIKSMIENRPDWCISRQRSWGVPIAVFYCKRCGNIIDDEKVFEHIADLVEKDEFGADIWFEREAEELLPEGYRCPKCDGEEFKKEEDILDVWFDSGVSHASVLKSGFWDELKWPADMYLEGSDQHRGWFQSSLLEGVASYGRAPYDAVLTHGFILDEKGNKMSKSLGNVIPPEKIIKMYGADILRLWVVSEDYTEDIKIGMNLLKSIADDYRKIRNTFRYFLGNLYDFDANKDRVPYENLLEIDRWMLSKLQRLIDRSHSAYSNYRFHKIYHEIKRFVIVDLSAVYLDILKDRLYVYAPDSLERRSAQTVLYELLDSLTKLLAPILSFTTEEIWGYVREINPSVKESIHLEEMPVVNQDYIDPELEETYEKLMKVRDDILKALEEARRSDIIRHPYEAKVVLSLPDEYRSVVEKRIDWIKFFFTVSQVELSDQAEGDVIIGGEKVEGGKIAVKKASGEKCPRCWIYDESVGKDGQPVCDRCMEQLERMEIKISDIEEAK.

A 'HIGH' region motif is present at residues 57–67; it reads PYANGNIHLGH. Glu568 is a binding site for L-isoleucyl-5'-AMP. The 'KMSKS' region signature appears at 609-613; sequence KMSKS. Lys612 contacts ATP. Residues Cys908, Cys911, Cys926, and Cys929 each coordinate Zn(2+).

This sequence belongs to the class-I aminoacyl-tRNA synthetase family. IleS type 1 subfamily. In terms of assembly, monomer. Zn(2+) serves as cofactor.

Its subcellular location is the cytoplasm. The enzyme catalyses tRNA(Ile) + L-isoleucine + ATP = L-isoleucyl-tRNA(Ile) + AMP + diphosphate. Its function is as follows. Catalyzes the attachment of isoleucine to tRNA(Ile). As IleRS can inadvertently accommodate and process structurally similar amino acids such as valine, to avoid such errors it has two additional distinct tRNA(Ile)-dependent editing activities. One activity is designated as 'pretransfer' editing and involves the hydrolysis of activated Val-AMP. The other activity is designated 'posttransfer' editing and involves deacylation of mischarged Val-tRNA(Ile). This Persephonella marina (strain DSM 14350 / EX-H1) protein is Isoleucine--tRNA ligase.